The following is a 720-amino-acid chain: Protein O-mannosyl-transferase 1 (720 aa).

The next 8 membrane-spanning stretches (helical) occupy residues 7-27 (PVSVTVEINVLLLAVTALALF), 67-87 (FGHMILALGAYLGGFDGNFVW), 105-125 (LIPALAGSFCVPLAYLVVVEL), 127-147 (YSHFSALGACALLLMENSLIV), 150-170 (RFMLLESVLIFFLLLAVLSYL), 178-198 (SFFKWFWLVICGVSCAFGIGV), 201-221 (MGMFTYFLLLSLAAVHTWQLI), and 239-259 (FLALVVLPVIMYLGFFYIHLT). 3 consecutive MIR domains span residues 291–354 (PLDV…IKDP), 365–422 (PKPV…VDIV), and 426–486 (SEKE…VEEH). Transmembrane regions (helical) follow at residues 570 to 590 (IVTWTTGNITLVVYCLLFLTY), 609 to 629 (LVLAGVVCLGGWAVNYLPFFL), 633 to 653 (TLFLYHYLPALTFKILQIPIV), and 670 to 690 (AFGGVILAVLCSVYMSYHSLS).

It belongs to the glycosyltransferase 39 family. Widely expressed. Has particularly strong expression in testis, ovary, brain, liver and heart.

Its subcellular location is the endoplasmic reticulum membrane. It carries out the reaction a di-trans,poly-cis-dolichyl beta-D-mannosyl phosphate + L-seryl-[protein] = 3-O-(alpha-D-mannosyl)-L-seryl-[protein] + a di-trans,poly-cis-dolichyl phosphate + H(+). It catalyses the reaction a di-trans,poly-cis-dolichyl beta-D-mannosyl phosphate + L-threonyl-[protein] = 3-O-(alpha-D-mannosyl)-L-threonyl-[protein] + a di-trans,poly-cis-dolichyl phosphate + H(+). It participates in protein modification; protein glycosylation. Transfers mannosyl residues to the hydroxyl group of serine or threonine residues. Coexpression of both POMT1 and POMT2 is necessary for enzyme activity, expression of either POMT1 or POMT2 alone is insufficient. The polypeptide is Protein O-mannosyl-transferase 1 (Danio rerio (Zebrafish)).